Consider the following 277-residue polypeptide: Type IV methyl-directed restriction enzyme EcoKMcrA (277 aa).

Residues Cys207 to Tyr257 enclose the HNH domain.

Its function is as follows. Restriction of 5-methyl and 5-hydroxymethylcytosines at the specific DNA sequence 5'-C(me)CGG-3'. This is Type IV methyl-directed restriction enzyme EcoKMcrA from Escherichia coli (strain K12).